Consider the following 530-residue polypeptide: Autoinducer-2 kinase (530 aa).

This sequence belongs to the FGGY kinase family.

Its subcellular location is the cytoplasm. The enzyme catalyses (S)-4,5-dihydroxypentane-2,3-dione + ATP = (2S)-2-hydroxy-3,4-dioxopentyl phosphate + ADP + H(+). Its function is as follows. Catalyzes the phosphorylation of autoinducer-2 (AI-2) to phospho-AI-2, which subsequently inactivates the transcriptional regulator LsrR and leads to the transcription of the lsr operon. Phosphorylates the ring-open form of (S)-4,5-dihydroxypentane-2,3-dione (DPD), which is the precursor to all AI-2 signaling molecules, at the C5 position. The polypeptide is Autoinducer-2 kinase (Escherichia coli (strain K12 / DH10B)).